A 286-amino-acid polypeptide reads, in one-letter code: Ribosomal RNA small subunit methyltransferase A (286 aa).

Asn31, Ile33, Gly58, Glu80, Asp106, and Asn125 together coordinate S-adenosyl-L-methionine.

The protein belongs to the class I-like SAM-binding methyltransferase superfamily. rRNA adenine N(6)-methyltransferase family. RsmA subfamily.

It is found in the cytoplasm. The enzyme catalyses adenosine(1518)/adenosine(1519) in 16S rRNA + 4 S-adenosyl-L-methionine = N(6)-dimethyladenosine(1518)/N(6)-dimethyladenosine(1519) in 16S rRNA + 4 S-adenosyl-L-homocysteine + 4 H(+). Functionally, specifically dimethylates two adjacent adenosines (A1518 and A1519) in the loop of a conserved hairpin near the 3'-end of 16S rRNA in the 30S particle. May play a critical role in biogenesis of 30S subunits. The protein is Ribosomal RNA small subunit methyltransferase A of Wolbachia pipientis wMel.